We begin with the raw amino-acid sequence, 418 residues long: Glutamyl-tRNA reductase (418 aa).

Substrate contacts are provided by residues 49–52 (TCNR), Ser-109, 114–116 (EPQ), and Gln-120. The active-site Nucleophile is the Cys-50. 189-194 (GAGETI) serves as a coordination point for NADP(+).

The protein belongs to the glutamyl-tRNA reductase family. Homodimer.

The enzyme catalyses (S)-4-amino-5-oxopentanoate + tRNA(Glu) + NADP(+) = L-glutamyl-tRNA(Glu) + NADPH + H(+). Its pathway is porphyrin-containing compound metabolism; protoporphyrin-IX biosynthesis; 5-aminolevulinate from L-glutamyl-tRNA(Glu): step 1/2. In terms of biological role, catalyzes the NADPH-dependent reduction of glutamyl-tRNA(Glu) to glutamate 1-semialdehyde (GSA). The sequence is that of Glutamyl-tRNA reductase from Salmonella choleraesuis (strain SC-B67).